Here is a 568-residue protein sequence, read N- to C-terminus: 2-isopropylmalate synthase (568 aa).

The Pyruvate carboxyltransferase domain maps to 37 to 313 (PRWLSTDLRD…DPMIDFSNID (277 aa)). 4 residues coordinate Mg(2+): Asp-46, His-252, His-254, and Asn-288. Residues 455–568 (EGVVGVMAYR…CSAVNRAQQS (114 aa)) form a regulatory domain region.

Belongs to the alpha-IPM synthase/homocitrate synthase family. LeuA type 2 subfamily. As to quaternary structure, homodimer. Requires Mg(2+) as cofactor.

Its subcellular location is the cytoplasm. The enzyme catalyses 3-methyl-2-oxobutanoate + acetyl-CoA + H2O = (2S)-2-isopropylmalate + CoA + H(+). It functions in the pathway amino-acid biosynthesis; L-leucine biosynthesis; L-leucine from 3-methyl-2-oxobutanoate: step 1/4. Functionally, catalyzes the condensation of the acetyl group of acetyl-CoA with 3-methyl-2-oxobutanoate (2-ketoisovalerate) to form 3-carboxy-3-hydroxy-4-methylpentanoate (2-isopropylmalate). This Thermobifida fusca (strain YX) protein is 2-isopropylmalate synthase.